The following is a 141-amino-acid chain: ATP synthase epsilon chain (141 aa).

This sequence belongs to the ATPase epsilon chain family. In terms of assembly, F-type ATPases have 2 components, CF(1) - the catalytic core - and CF(0) - the membrane proton channel. CF(1) has five subunits: alpha(3), beta(3), gamma(1), delta(1), epsilon(1). CF(0) has three main subunits: a, b and c.

Its subcellular location is the cell inner membrane. Its function is as follows. Produces ATP from ADP in the presence of a proton gradient across the membrane. The sequence is that of ATP synthase epsilon chain from Burkholderia thailandensis (strain ATCC 700388 / DSM 13276 / CCUG 48851 / CIP 106301 / E264).